A 94-amino-acid polypeptide reads, in one-letter code: Large ribosomal subunit protein bL27 (94 aa).

The disordered stretch occupies residues 1 to 25 (MAHKKGTGSTRNGRDSQSKRLGVKR).

The protein belongs to the bacterial ribosomal protein bL27 family.

This chain is Large ribosomal subunit protein bL27, found in Gloeothece citriformis (strain PCC 7424) (Cyanothece sp. (strain PCC 7424)).